The sequence spans 106 residues: GQPKAAPSVTLFPPSSEELQANKATLVCLVSDFNPGAVTVAWKADGSPVKVGVETTKPSKQSNNKYAASSYLSLTPEQWKSHRSYSCRVTHEGSTVEKTVAPAECS.

The 95-residue stretch at 7–101 (PSVTLFPPSS…EGSTVEKTVA (95 aa)) folds into the Ig-like domain. A disulfide bridge connects residues Cys28 and Cys87.

In terms of assembly, immunoglobulins are composed of two identical heavy chains and two identical light chains; disulfide-linked.

The protein localises to the secreted. Its subcellular location is the cell membrane. Its function is as follows. Constant region of immunoglobulin light chains. Immunoglobulins, also known as antibodies, are membrane-bound or secreted glycoproteins produced by B lymphocytes. In the recognition phase of humoral immunity, the membrane-bound immunoglobulins serve as receptors which, upon binding of a specific antigen, trigger the clonal expansion and differentiation of B lymphocytes into immunoglobulins-secreting plasma cells. Secreted immunoglobulins mediate the effector phase of humoral immunity, which results in the elimination of bound antigens. The antigen binding site is formed by the variable domain of one heavy chain, together with that of its associated light chain. Thus, each immunoglobulin has two antigen binding sites with remarkable affinity for a particular antigen. The variable domains are assembled by a process called V-(D)-J rearrangement and can then be subjected to somatic hypermutations which, after exposure to antigen and selection, allow affinity maturation for a particular antigen. The protein is Immunoglobulin lambda constant 7 of Homo sapiens (Human).